Reading from the N-terminus, the 293-residue chain is MAAIIIRGSDIAQEIREDLKKEAAWLKAYGVVPGLVTILVGQDPASMSYVTAKQKTACKLGFYSLQDSQPGHVSESLLLDRIARYNKDPRIHGILVQLPLPPHIDEQKILYAIDPGKDVDGFHPYNVGKLMIGQADFLPCTPAGIQQLLIRSGIQTDGAEVVVVGRSNIVGKPIANMLLQKQKGANATVTVCHTGTRDVGVHTRRADILIVAAGKPKAITADMVKEGAVVIDVGVNRVGVTSDGKAKLCGDVDFEPVREKAGAITPVPGGVGPMTITMLMVNTLKAARLSAGL.

NADP(+) contacts are provided by residues Gly165–Ser167, Thr194, and Val235.

This sequence belongs to the tetrahydrofolate dehydrogenase/cyclohydrolase family. Homodimer.

The enzyme catalyses (6R)-5,10-methylene-5,6,7,8-tetrahydrofolate + NADP(+) = (6R)-5,10-methenyltetrahydrofolate + NADPH. It catalyses the reaction (6R)-5,10-methenyltetrahydrofolate + H2O = (6R)-10-formyltetrahydrofolate + H(+). The protein operates within one-carbon metabolism; tetrahydrofolate interconversion. Catalyzes the oxidation of 5,10-methylenetetrahydrofolate to 5,10-methenyltetrahydrofolate and then the hydrolysis of 5,10-methenyltetrahydrofolate to 10-formyltetrahydrofolate. The polypeptide is Bifunctional protein FolD (Syntrophus aciditrophicus (strain SB)).